A 180-amino-acid chain; its full sequence is Transcription factor HES-7.1-B (180 aa).

Residues 13–70 (HRKLLKPLVEKRRRERINNSLEKLRIFLSQTLKSEKLKNPKVEKAEILECTVQFLQSR) enclose the bHLH domain. In terms of domain architecture, Orange spans 84-116 (YQSGFQHCLETTLHFMNSKPDMNGVTKELLSHQ). A WRPW motif motif is present at residues 176–179 (WRPW).

In terms of assembly, transcription repression requires formation of a complex with a corepressor protein of the Groucho/TLE family. Expressed in the presumptive midbrain-hindbrain boundary (MHB) as early as the early gastrula stage (stage 10.5). Expression in the MHB continues through to tailbud stage. Also transiently expressed in the eye anlage at late neurula stage.

The protein localises to the nucleus. Functionally, transcriptional repressor. Represses transcription from both N box- and E box-containing promoters. Demarcates the prospective midbrain-hindbrain boundary (MHB) region in the neuroectoderm in early gastrulae embryos by repressing transcription of a number of target genes. The sequence is that of Transcription factor HES-7.1-B (hes7.1-b) from Xenopus laevis (African clawed frog).